A 346-amino-acid polypeptide reads, in one-letter code: Histidinol-phosphate aminotransferase (346 aa).

Lys-209 carries the N6-(pyridoxal phosphate)lysine modification.

This sequence belongs to the class-II pyridoxal-phosphate-dependent aminotransferase family. Histidinol-phosphate aminotransferase subfamily. As to quaternary structure, homodimer. The cofactor is pyridoxal 5'-phosphate.

The catalysed reaction is L-histidinol phosphate + 2-oxoglutarate = 3-(imidazol-4-yl)-2-oxopropyl phosphate + L-glutamate. It participates in amino-acid biosynthesis; L-histidine biosynthesis; L-histidine from 5-phospho-alpha-D-ribose 1-diphosphate: step 7/9. The protein is Histidinol-phosphate aminotransferase of Aliivibrio fischeri (strain MJ11) (Vibrio fischeri).